The sequence spans 750 residues: Methylmalonyl-CoA mutase, mitochondrial (750 aa).

A mitochondrion-targeting transit peptide spans 1-32; it reads MLRAKNQLFLLSPHYLRQVKESSGSRLIQQRL. Residue Q50 participates in malonyl-CoA binding. An N6-acetyllysine modification is found at K89. Malonyl-CoA contacts are provided by residues 96–99 and 106–110; these read YPTM and TIRQY. K212 carries the N6-acetyllysine modification. Residues 216 to 218, R228, K255, H265, and 304 to 306 contribute to the malonyl-CoA site; these read TIQ and RLS. K335 carries the N6-acetyllysine modification. K343 is modified (N6-succinyllysine). Phosphoserine is present on S481. The residue at position 595 (K595) is an N6-succinyllysine. K602 is subject to N6-acetyllysine. The region spanning 614–746 is the B12-binding domain; the sequence is RPRLLVAKMG…DDIEKCLEKK (133 aa). H627 is an adenosylcob(III)alamin binding site.

This sequence belongs to the methylmalonyl-CoA mutase family. As to quaternary structure, homodimer. Interacts (the apoenzyme form) with MMAA; the interaction is GTP dependent. It depends on adenosylcob(III)alamin as a cofactor.

It localises to the mitochondrion matrix. Its subcellular location is the mitochondrion. The protein localises to the cytoplasm. The catalysed reaction is (R)-methylmalonyl-CoA = succinyl-CoA. Inhibited by itaconyl-CoA, a metabolite that inactivates the coenzyme B12 cofactor. In terms of biological role, catalyzes the reversible isomerization of methylmalonyl-CoA (MMCoA) (generated from branched-chain amino acid metabolism and degradation of dietary odd chain fatty acids and cholesterol) to succinyl-CoA (3-carboxypropionyl-CoA), a key intermediate of the tricarboxylic acid cycle. The sequence is that of Methylmalonyl-CoA mutase, mitochondrial (MMUT) from Bos taurus (Bovine).